Consider the following 430-residue polypeptide: CinA-like protein (430 aa).

The protein belongs to the CinA family.

The protein is CinA-like protein of Prochlorococcus marinus (strain NATL1A).